Reading from the N-terminus, the 462-residue chain is Argininosuccinate lyase (462 aa).

The protein belongs to the lyase 1 family. Argininosuccinate lyase subfamily.

The protein localises to the cytoplasm. The catalysed reaction is 2-(N(omega)-L-arginino)succinate = fumarate + L-arginine. It participates in amino-acid biosynthesis; L-arginine biosynthesis; L-arginine from L-ornithine and carbamoyl phosphate: step 3/3. The protein is Argininosuccinate lyase of Dechloromonas aromatica (strain RCB).